The primary structure comprises 144 residues: Globin (144 aa).

The residue at position 1 (Ala1) is an N-acetylalanine. Residues 1 to 144 (ALSAADAGLL…IISALQSAGK (144 aa)) enclose the Globin domain. Heme b is bound at residue His95.

It belongs to the globin family. In terms of assembly, monomer.

This is Globin from Aplysia juliana (Walking sea hare).